Consider the following 1038-residue polypeptide: MGSRRPRLPGFGEDCEPRGGGRGGGGRGRGSYYPQAQQYHPQGHGGRGGAGYYHGAAPQPRGAMVVQQWRPATAAAEHLGHQQPYNSSVRPQHYYGPSAIAPELLQAMDAPHEPPANVSSPEAASPEASSPRSLALEVTEQLQDLSVQYQLSESQEEIVQHVPVSTKSFKFPHRPGSGSIGTRCLVKANHFFAQLPDKDLHQYDVSITPELTSRIRSRAVMEELVRLHKMSYLGGRLPAYDGRKSLYTAGPLPFTSKEFRISLLEEDDGSGSERRQKTYNVVIKFAARADLHRLEQFLAGRQAEAPQEALQVLDIVLRELPTARYAPFGRSFFSPDLGRRRSLGEGLETWRGFYQSIRPTQMGLSLNIDMSATAFFEPLPVIDFVIQLLNTDIRSRPLSDAERVKIKKALRGVKVGVTHRGNMRRKYRISGLTSQATRELTFPVDQGGTVKSVVQYFQETYGFAIQHTYLPCLQVGNQQRPNYLPMEVCKIVEGQRYSKRLNQNQIRALLEETCQRPHDRERDIIQMVNHNSYHEDPYAKEFGIKISERLALVEARILPAPRLKYNETGREKDCLPRVGQWNMMNKKMVNGGRVRSWICVNFARNVQESVASGFCRELARMCQASGMDFALEPVLPSMYARPDQVERALKARFHDAMNILGPQHKELDLLIGLLPDNNGSLYGDLKRICEIDLGLVSQCCCTKQVFKMNKQILANLALKINVKVGGRNTVLVDAVSRRIPLVTDRPTIIFGADVTHPHPGEDSSPSIAAVVASQDWPEVTKYAGLVSAQSHRQELIDDLYNITHDPHRGPICGGMVRELLISFKRSTGQKPQRIIFYRDGVSEGQFYQVLLHELDAIRKACASLEANYQPQVTFIVVQKRHHTRLFAHNHNDQNSVDRSGNILPGTVVDSKICHPTEFDFFLCSHAGIKGTSRPAHYHVLWDENNFTADALQTLTNNLCYTYARCTRSVSIVPPAYYAHLAAFRARFYMESDSSDSGSMASGRGGGSSTSRSTRAAGGGAVRPLPALKDSVKNVMFYC.

Disordered stretches follow at residues 1 to 58 and 110 to 134; these read MGSR…GAAP and APHE…PRSL. 2 stretches are compositionally biased toward gly residues: residues 18 to 29 and 43 to 52; these read RGGGRGGGGRGR and GHGGRGGAGY. Low complexity predominate over residues 115–134; the sequence is PANVSSPEAASPEASSPRSL. In terms of domain architecture, PAZ spans 380–493; the sequence is PVIDFVIQLL…LPMEVCKIVE (114 aa). Positions 669 to 990 constitute a Piwi domain; sequence LLIGLLPDNN…AAFRARFYME (322 aa). The interval 992–1021 is disordered; the sequence is DSSDSGSMASGRGGGSSTSRSTRAAGGGAV.

This sequence belongs to the argonaute family. Ago subfamily.

Probably involved in the RNA silencing pathway. May bind to short RNAs such as microRNAs (miRNAs) or short interfering RNAs (siRNAs), and represses the translation of mRNAs which are complementary to them. This Oryza sativa subsp. japonica (Rice) protein is Protein argonaute 1D (AGO1D).